The following is a 133-amino-acid chain: Small ribosomal subunit protein uS11 (133 aa).

Residues 1–23 are disordered; sequence MPPKTRGAVRKPRKKDKKNIALG. Over residues 7–17 the composition is skewed to basic residues; the sequence is GAVRKPRKKDK.

This sequence belongs to the universal ribosomal protein uS11 family. In terms of assembly, part of the 30S ribosomal subunit. Interacts with proteins S7 and S18. Binds to IF-3.

In terms of biological role, located on the platform of the 30S subunit, it bridges several disparate RNA helices of the 16S rRNA. Forms part of the Shine-Dalgarno cleft in the 70S ribosome. This Arthrobacter sp. (strain FB24) protein is Small ribosomal subunit protein uS11.